Consider the following 427-residue polypeptide: Phosphoribosylamine--glycine ligase (427 aa).

An ATP-grasp domain is found at Lys107–Asp312. Residue Ile133–Ser193 participates in ATP binding. Glu282 and Asn284 together coordinate Mg(2+).

This sequence belongs to the GARS family. Mg(2+) serves as cofactor. The cofactor is Mn(2+).

It carries out the reaction 5-phospho-beta-D-ribosylamine + glycine + ATP = N(1)-(5-phospho-beta-D-ribosyl)glycinamide + ADP + phosphate + H(+). It functions in the pathway purine metabolism; IMP biosynthesis via de novo pathway; N(1)-(5-phospho-D-ribosyl)glycinamide from 5-phospho-alpha-D-ribose 1-diphosphate: step 2/2. The chain is Phosphoribosylamine--glycine ligase from Brucella melitensis biotype 1 (strain ATCC 23456 / CCUG 17765 / NCTC 10094 / 16M).